A 132-amino-acid polypeptide reads, in one-letter code: Large ribosomal subunit protein bL17 (132 aa).

Belongs to the bacterial ribosomal protein bL17 family. As to quaternary structure, part of the 50S ribosomal subunit. Contacts protein L32.

This Ralstonia pickettii (strain 12J) protein is Large ribosomal subunit protein bL17.